A 109-amino-acid polypeptide reads, in one-letter code: Thioredoxin (109 aa).

The Thioredoxin domain maps to 2 to 107; that stretch reads SISQVIDTSF…LLNTLQKHLK (106 aa). Residues Cys31 and Cys34 each act as nucleophile in the active site. Residues Cys31 and Cys34 are joined by a disulfide bond.

It belongs to the thioredoxin family.

It localises to the plastid. Its subcellular location is the chloroplast. Functionally, participates in various redox reactions through the reversible oxidation of its active center dithiol to a disulfide and catalyzes dithiol-disulfide exchange reactions. This Griffithsia pacifica (Red alga) protein is Thioredoxin (trxA).